The sequence spans 345 residues: Chorismate synthase (345 aa).

The protein belongs to the chorismate synthase family. In terms of assembly, homotetramer. The cofactor is FMNH2.

It catalyses the reaction 5-O-(1-carboxyvinyl)-3-phosphoshikimate = chorismate + phosphate. It participates in metabolic intermediate biosynthesis; chorismate biosynthesis; chorismate from D-erythrose 4-phosphate and phosphoenolpyruvate: step 7/7. The polypeptide is Chorismate synthase (aroC) (Carsonella ruddii (strain PV)).